A 256-amino-acid chain; its full sequence is uncharacterized protein (256 aa).

Residues 187 to 223 adopt a coiled-coil conformation; the sequence is MEEEEISEVEDALNVLQRLCAQEEGDNKEAETNNNNY.

This is an uncharacterized protein from Ostreid herpesvirus 1 (isolate France) (OsHV-1).